Reading from the N-terminus, the 316-residue chain is MAKLSKQQKKQMYIEKLSSLIQQYSKILIVHVDNVGSNQMASVRKSLRGKATILMGKNTRIRTALKKNLQAVPQIEKLLPLVKLNMGFVFCKDDLSEIRNIILDNKSSSHPARLGVIAPIDVFIPPGPTGMDPSHTSFLESLGISTKIVKGQIEIQEHVHLIKQGEKVTASSATLLRKFNMNPSYGVDVRTVYDDGVIYDAKVLDITDEDILEKFSKGVSNVAALSRATGVITEASYPHVFVEAFKNIVALIIDSDYTFPLMKILKKWVENPEAFAAVAAPASAAKADEPKKEEAKKVEEEEEEEEDGFMGFGMFD.

Residues 282 to 316 (ASAAKADEPKKEEAKKVEEEEEEEEDGFMGFGMFD) are disordered. The span at 286–299 (KADEPKKEEAKKVE) shows a compositional bias: basic and acidic residues.

Belongs to the universal ribosomal protein uL10 family. In terms of assembly, P0 forms a pentameric complex by interaction with dimers of P1 and P2. In terms of processing, phosphorylated.

Its function is as follows. Ribosomal protein P0 is the functional equivalent of E.coli protein L10. The polypeptide is Large ribosomal subunit protein uL10 (RPLP0) (Plasmodium falciparum (isolate 7G8)).